Consider the following 806-residue polypeptide: Exonuclease 1 (806 aa).

The segment at 1 to 99 (MGIQGLLQFI…KSRRERRQAN (99 aa)) is N-domain. Mg(2+) contacts are provided by Asp30, Asp78, Glu150, Asp152, Asp171, Asp173, and Asp225. The segment at 138–229 (RTRGVDCVVA…ILSGCDYLQS (92 aa)) is I-domain. 3 disordered regions span residues 337 to 426 (RIDD…EDTS), 443 to 475 (HCPE…PFRP), and 512 to 754 (ETQE…SPGL). The segment covering 355–378 (RSSSWNDRCDKTATTQASIWSQNY) has biased composition (polar residues). Residues 412–425 (PQRESQVKRPREDT) show a composition bias toward basic and acidic residues. Polar residues-rich tracts occupy residues 447–458 (TQPTTKPLTNDN), 533–542 (SQSGGDTSSL), and 578–589 (WSGTTKELNKSV). Basic and acidic residues predominate over residues 592–601 (PARDSTERQR). Residues 602–615 (SSSTPSGLSTLQQF) show a composition bias toward polar residues. The span at 651-670 (SQDSAYFSQSSSISASVENS) shows a compositional bias: low complexity. Over residues 676–685 (NSDKEKERDS) the composition is skewed to basic and acidic residues. Over residues 686 to 696 (VVSNSPSSSPL) the composition is skewed to low complexity. The segment covering 744 to 754 (KNVNNENSPGL) has biased composition (polar residues).

It belongs to the XPG/RAD2 endonuclease family. EXO1 subfamily. The cofactor is Mg(2+).

The protein resides in the nucleus. Its function is as follows. 5'-&gt;3' double-stranded DNA exonuclease which may also contain a cryptic 3'-&gt;5' double-stranded DNA exonuclease activity. Also exhibits endonuclease activity against 5'-overhanging flap structures similar to those generated by displacement synthesis when DNA polymerase encounters the 5'-end of a downstream Okazaki fragment. Required for DNA mismatch repair (MMR). In Danio rerio (Zebrafish), this protein is Exonuclease 1 (exo1).